Here is a 1311-residue protein sequence, read N- to C-terminus: Stress response protein NST1 (1311 aa).

Disordered regions lie at residues 1-226, 308-379, 478-521, 542-576, and 613-1083; these read MKGN…QEER, LGPT…RQRP, NGNN…VQTN, SASA…QRME, and ELAQ…NLEE. Residues 8 to 27 are compositionally biased toward low complexity; it reads PAVASQPTSPASPTPSKGTS. The segment covering 46 to 58 has biased composition (polar residues); it reads SVETPQPSPTVSA. A compositionally biased stretch (low complexity) spans 68-86; sequence GQPPSTAPTAPSGSNASGG. The span at 93-103 shows a compositional bias: basic residues; sequence NRKKAKRRAKL. Over residues 116–133 the composition is skewed to polar residues; sequence DNLSNGVAAHSASSSLPK. Residues 213–226 are compositionally biased toward basic and acidic residues; it reads SKEKIWNTSSQEER. 2 stretches are compositionally biased toward acidic residues: residues 343-372 and 491-518; these read GDDE…EEPE and PEDD…EEEV. Residues 450-521 adopt a coiled-coil conformation; sequence IEMMEQLAER…EYDEEEVQTN (72 aa). Positions 599-795 form a coiled coil; the sequence is REKVAKERQE…SQKATTLANV (197 aa). Composition is skewed to basic and acidic residues over residues 613 to 682 and 689 to 786; these read ELAQ…NEER and QRKA…ERAS. Composition is skewed to low complexity over residues 805–829 and 891–922; these read QSQA…PQLP and SKGS…LPTP. Residues 923-933 are compositionally biased toward pro residues; sequence FGMPHPPPNQH. Residues 934–945 are compositionally biased toward low complexity; the sequence is YPPGIGPLNAPP. Positions 960-975 are enriched in polar residues; the sequence is MYQQSPFGFRQATQQH. Residues 984–994 show a composition bias toward gly residues; sequence IPMGPGRGLGH. Positions 1026 to 1038 are enriched in polar residues; the sequence is PLSSHSRQASANF. Low complexity predominate over residues 1041-1052; it reads PIAATPIARPTP.

The protein belongs to the NST1 family.

The protein resides in the cytoplasm. Functionally, may act as a negative regulator of salt tolerance. The chain is Stress response protein NST1 (NST1) from Pyricularia oryzae (strain 70-15 / ATCC MYA-4617 / FGSC 8958) (Rice blast fungus).